We begin with the raw amino-acid sequence, 340 residues long: Tryptophan--tRNA ligase (340 aa).

Residues Arg11 to Thr13 and Gly19 to His20 contribute to the ATP site. The 'HIGH' region motif lies at Pro12 to His20. Asp140 provides a ligand contact to L-tryptophan. ATP is bound by residues Gly152–Asp154, Leu194, and Lys202–Ser206. Residues Lys202 to Ser206 carry the 'KMSKS' region motif.

This sequence belongs to the class-I aminoacyl-tRNA synthetase family. In terms of assembly, homodimer.

It localises to the cytoplasm. The catalysed reaction is tRNA(Trp) + L-tryptophan + ATP = L-tryptophyl-tRNA(Trp) + AMP + diphosphate + H(+). Its function is as follows. Catalyzes the attachment of tryptophan to tRNA(Trp). The polypeptide is Tryptophan--tRNA ligase (Streptococcus mutans serotype c (strain ATCC 700610 / UA159)).